The following is a 264-amino-acid chain: Ribosomal RNA small subunit methyltransferase A (264 aa).

Residues His15, Leu17, Gly42, Glu63, Asp88, and Asn109 each contribute to the S-adenosyl-L-methionine site.

This sequence belongs to the class I-like SAM-binding methyltransferase superfamily. rRNA adenine N(6)-methyltransferase family. RsmA subfamily.

The protein localises to the cytoplasm. It carries out the reaction adenosine(1518)/adenosine(1519) in 16S rRNA + 4 S-adenosyl-L-methionine = N(6)-dimethyladenosine(1518)/N(6)-dimethyladenosine(1519) in 16S rRNA + 4 S-adenosyl-L-homocysteine + 4 H(+). In terms of biological role, specifically dimethylates two adjacent adenosines (A1518 and A1519) in the loop of a conserved hairpin near the 3'-end of 16S rRNA in the 30S particle. May play a critical role in biogenesis of 30S subunits. The chain is Ribosomal RNA small subunit methyltransferase A from Nitrosococcus oceani (strain ATCC 19707 / BCRC 17464 / JCM 30415 / NCIMB 11848 / C-107).